Reading from the N-terminus, the 1290-residue chain is Vacuolating cytotoxin autotransporter (1290 aa).

Residues 1-33 form the signal peptide; it reads MEIQQTHRKINRPLVSLALVGALVSITPQQSHA. Residues 326–374 are disordered; the sequence is PPEGGYKDKPKDKPSNTTQNNANNNQQNSAQNNSNTQVINPPNSAQKTE. A compositionally biased stretch (basic and acidic residues) spans 330–339; it reads GYKDKPKDKP. Positions 340–362 are enriched in low complexity; the sequence is SNTTQNNANNNQQNSAQNNSNTQ. Residues 363-374 show a composition bias toward polar residues; that stretch reads VINPPNSAQKTE. The 273-residue stretch at 1018 to 1290 folds into the Autotransporter domain; that stretch reads KYEKPTNVWA…ASNLGMRYSF (273 aa).

Its subcellular location is the periplasm. The protein resides in the secreted. The protein localises to the cell surface. It is found in the cell outer membrane. In terms of biological role, induces vacuolation of eukaryotic cells. Causes ulceration and gastric lesions. The polypeptide is Vacuolating cytotoxin autotransporter (vacA) (Helicobacter pylori (strain ATCC 700392 / 26695) (Campylobacter pylori)).